The primary structure comprises 256 residues: Peroxisomal membrane protein PMP30B (256 aa).

This sequence belongs to the peroxin-11 family.

It is found in the peroxisome membrane. Involved in peroxisomal proliferation. Could participate in peroxisomal elongation or fission. May be involved in parceling of peroxisomes into regular quanta. The chain is Peroxisomal membrane protein PMP30B (PEX11B) from Candida boidinii (Yeast).